The chain runs to 330 residues: WRKY transcription factor WRKY51 (330 aa).

The segment at 39–61 is disordered; it reads QTGTSERSPAPAPAQEQQQQQQV. Residues 51 to 60 show a composition bias toward low complexity; the sequence is PAQEQQQQQQ. The Nuclear localization signal signature appears at 74-81; the sequence is FKKVISML. 2 disordered regions span residues 91–117 and 302–330; these read RGPV…SAVS and YEGE…LPLA. The segment covering 101 to 117 has biased composition (low complexity); the sequence is PAASEPAPVRSSPSAVS. Residues 245–311 constitute a DNA-binding region (WRKY); that stretch reads KVADIPADDF…YEGEHRHTPS (67 aa). The segment covering 318 to 330 has biased composition (pro residues); sequence PPAPPPPLALPLA.

The protein belongs to the WRKY group II-a family. As to expression, highly expressed in aleurone cells. In seeds, predominantly present in the plumule, radicle and scutellum of the embryo.

It localises to the nucleus. Functionally, transcription factor. Interacts, when in complex with WRKY71, specifically with the W box (5'-(T)TGAC[CT]-3'), a frequently occurring elicitor-responsive cis-acting element. Represses specifically gibberellic acid (GA)-induced promoters in aleurone cells, probably by interfering with GAM1. This is WRKY transcription factor WRKY51 from Oryza sativa subsp. indica (Rice).